Consider the following 132-residue polypeptide: MSMQDPIADMFTRIRNGLSAEKEVVSVPFSKMKMEIANFLVNEGYIKGCSKGTTLAGHPSIEIELKYHAGAPVIEMIKRVSRPSLRIYKSHEELPKVYGGFGVAIISTSKGLVSDRKARDLGVGGEIIGYVA.

It belongs to the universal ribosomal protein uS8 family. In terms of assembly, part of the 30S ribosomal subunit. Contacts proteins S5 and S12.

Functionally, one of the primary rRNA binding proteins, it binds directly to 16S rRNA central domain where it helps coordinate assembly of the platform of the 30S subunit. The sequence is that of Small ribosomal subunit protein uS8 from Francisella philomiragia subsp. philomiragia (strain ATCC 25017 / CCUG 19701 / FSC 153 / O#319-036).